The chain runs to 665 residues: Transketolase 1 (665 aa).

His-26 serves as a coordination point for substrate. Thiamine diphosphate-binding positions include His-66 and 114–116; that span reads GPL. Asp-155 serves as a coordination point for Mg(2+). Positions 156 and 185 each coordinate thiamine diphosphate. Residues Asn-185 and Ile-187 each contribute to the Mg(2+) site. Substrate contacts are provided by His-261, Arg-358, and Ser-385. Thiamine diphosphate is bound at residue His-261. Glu-412 acts as the Proton donor in catalysis. Residue Phe-438 coordinates thiamine diphosphate. Positions 462, 470, and 521 each coordinate substrate.

The protein belongs to the transketolase family. In terms of assembly, homodimer. Mg(2+) serves as cofactor. It depends on Ca(2+) as a cofactor. Requires Mn(2+) as cofactor. Co(2+) is required as a cofactor. The cofactor is thiamine diphosphate.

The catalysed reaction is D-sedoheptulose 7-phosphate + D-glyceraldehyde 3-phosphate = aldehydo-D-ribose 5-phosphate + D-xylulose 5-phosphate. Catalyzes the transfer of a two-carbon ketol group from a ketose donor to an aldose acceptor, via a covalent intermediate with the cofactor thiamine pyrophosphate. This Vibrio cholerae serotype O1 (strain ATCC 39315 / El Tor Inaba N16961) protein is Transketolase 1 (tkt1).